The sequence spans 54 residues: ATP synthase protein 8 (54 aa).

The chain crosses the membrane as a helical span at residues 9–29 (WIINFFIVWTADFTLLIVLSI).

This sequence belongs to the ATPase protein 8 family. F-type ATPases have 2 components, CF(1) - the catalytic core - and CF(0) - the membrane proton channel.

Its subcellular location is the mitochondrion membrane. Its function is as follows. Mitochondrial membrane ATP synthase (F(1)F(0) ATP synthase or Complex V) produces ATP from ADP in the presence of a proton gradient across the membrane which is generated by electron transport complexes of the respiratory chain. F-type ATPases consist of two structural domains, F(1) - containing the extramembraneous catalytic core and F(0) - containing the membrane proton channel, linked together by a central stalk and a peripheral stalk. During catalysis, ATP synthesis in the catalytic domain of F(1) is coupled via a rotary mechanism of the central stalk subunits to proton translocation. Part of the complex F(0) domain. Minor subunit located with subunit a in the membrane. This is ATP synthase protein 8 (MT-ATP8) from Arbacia lixula (Black urchin).